The following is a 239-amino-acid chain: Purine nucleoside phosphorylase DeoD-type (239 aa).

His5 is an a purine D-ribonucleoside binding site. Phosphate is bound by residues Gly21, Arg25, Arg44, and 88–91; that span reads RVGS. A purine D-ribonucleoside-binding positions include 180–182 and 204–205; these read EME and SD. Asp205 serves as the catalytic Proton donor.

Belongs to the PNP/UDP phosphorylase family. In terms of assembly, homohexamer; trimer of homodimers.

The enzyme catalyses a purine D-ribonucleoside + phosphate = a purine nucleobase + alpha-D-ribose 1-phosphate. It carries out the reaction a purine 2'-deoxy-D-ribonucleoside + phosphate = a purine nucleobase + 2-deoxy-alpha-D-ribose 1-phosphate. Its function is as follows. Catalyzes the reversible phosphorolytic breakdown of the N-glycosidic bond in the beta-(deoxy)ribonucleoside molecules, with the formation of the corresponding free purine bases and pentose-1-phosphate. The polypeptide is Purine nucleoside phosphorylase DeoD-type (Yersinia pseudotuberculosis serotype O:1b (strain IP 31758)).